The following is a 622-amino-acid chain: Cilia- and flagella-associated protein 206 (622 aa).

This sequence belongs to the CFAP206 family.

Its subcellular location is the cytoplasm. It is found in the cytoskeleton. The protein resides in the cilium axoneme. The protein localises to the cilium basal body. Essential for sperm motility and is involved in the regulation of the beating frequency of motile cilia on the epithelial cells of the respiratory tract. Required for the establishment of radial spokes in sperm flagella. This Rattus norvegicus (Rat) protein is Cilia- and flagella-associated protein 206.